We begin with the raw amino-acid sequence, 541 residues long: Membrane protein insertase YidC (541 aa).

A run of 6 helical transmembrane segments spans residues 6–26 (NILL…WQAD), 325–345 (LVVD…LLMF), 349–369 (FVGN…GLLF), 420–440 (GGCL…WVLL), 457–477 (LSVQ…MFIM), and 500–520 (VIFT…WLVG).

This sequence belongs to the OXA1/ALB3/YidC family. Type 1 subfamily. Interacts with the Sec translocase complex via SecD. Specifically interacts with transmembrane segments of nascent integral membrane proteins during membrane integration.

The protein localises to the cell inner membrane. In terms of biological role, required for the insertion and/or proper folding and/or complex formation of integral membrane proteins into the membrane. Involved in integration of membrane proteins that insert both dependently and independently of the Sec translocase complex, as well as at least some lipoproteins. Aids folding of multispanning membrane proteins. In Shewanella sp. (strain W3-18-1), this protein is Membrane protein insertase YidC.